We begin with the raw amino-acid sequence, 465 residues long: Casein kinase 1-like protein 2 (465 aa).

In terms of domain architecture, Protein kinase spans 9–277 (FRLGRKIGGG…LKRLFRDLFI (269 aa)). Residues 15–23 (IGGGSFGEI) and lysine 38 each bind ATP. Aspartate 128 acts as the Proton acceptor in catalysis. 2 disordered regions span residues 300–344 (STPP…GIPR) and 396–428 (REAAVLGTDSEPSNPQIVEAGSGSNSKIPVSRN). Polar residues predominate over residues 405 to 428 (SEPSNPQIVEAGSGSNSKIPVSRN).

This sequence belongs to the protein kinase superfamily. CK1 Ser/Thr protein kinase family. Casein kinase I subfamily. In terms of assembly, monomer. Post-translationally, autophosphorylated.

It is found in the cytoplasm. The protein resides in the nucleus. The enzyme catalyses L-seryl-[protein] + ATP = O-phospho-L-seryl-[protein] + ADP + H(+). The catalysed reaction is L-threonyl-[protein] + ATP = O-phospho-L-threonyl-[protein] + ADP + H(+). Casein kinases are operationally defined by their preferential utilization of acidic proteins such as caseins as substrates. It can phosphorylate a large number of proteins. The polypeptide is Casein kinase 1-like protein 2 (Arabidopsis thaliana (Mouse-ear cress)).